We begin with the raw amino-acid sequence, 201 residues long: Probable molybdenum cofactor guanylyltransferase (201 aa).

GTP is bound by residues 6 to 8 (LAG), K18, D65, and D97. D97 contacts Mg(2+).

Belongs to the MobA family. The cofactor is Mg(2+).

The protein resides in the cytoplasm. The catalysed reaction is Mo-molybdopterin + GTP + H(+) = Mo-molybdopterin guanine dinucleotide + diphosphate. Its function is as follows. Transfers a GMP moiety from GTP to Mo-molybdopterin (Mo-MPT) cofactor (Moco or molybdenum cofactor) to form Mo-molybdopterin guanine dinucleotide (Mo-MGD) cofactor. The chain is Probable molybdenum cofactor guanylyltransferase from Staphylococcus epidermidis (strain ATCC 35984 / DSM 28319 / BCRC 17069 / CCUG 31568 / BM 3577 / RP62A).